The following is a 348-amino-acid chain: Lysophosphatidic acid receptor 2 (348 aa).

Topologically, residues 1-30 (MGHCYYNETIGFFYNNSGKELSSHWRPKDV) are extracellular. Residues Asn-7 and Asn-15 are each glycosylated (N-linked (GlcNAc...) asparagine). A helical membrane pass occupies residues 31 to 51 (VVVALGLTVSVLVLLTNLLVI). Residues 52-66 (AAIASNRRFHQPIYY) lie on the Cytoplasmic side of the membrane. A helical transmembrane segment spans residues 67-87 (LLGNLAAADLFAGVAYLFLMF). Over 88–104 (HTGPRTARLSLEGWFLR) the chain is Extracellular. Residues 105–124 (QGLLDTSLTASVATLLAIAV) form a helical membrane-spanning segment. Topologically, residues 125–143 (ERRRSVMAVQLHSRLPRGR) are cytoplasmic. Residues 144–164 (VVMLIVGVWVAALGLGLLPAH) form a helical membrane-spanning segment. Residues 165–185 (SWHCLCALDRCSRMAPLLSRS) are Extracellular-facing. Residues 186–206 (YLAVWALSSLLVFLLMVAVYT) form a helical membrane-spanning segment. The Cytoplasmic segment spans residues 207 to 239 (RIFFYVRRRVQRMAEHVSCHPRYRETTLSLVKT). The chain crosses the membrane as a helical span at residues 240-260 (VVIILGAFVVCWTPGQVVLLL). Residues 261-276 (DGLGCKSCNVLAVEKY) lie on the Extracellular side of the membrane. A helical transmembrane segment spans residues 277–294 (FLLLAEANSLVNAAVYSC). Over 295-348 (RDAEMRRTFRRLLCCACLRRSTRESAHYTSSAQGGASTRIMLPENGHPLMDSTL) the chain is Cytoplasmic. A lipid anchor (S-palmitoyl cysteine) is attached at Cys-308. A PDZ-binding motif is present at residues 345–348 (DSTL).

This sequence belongs to the G-protein coupled receptor 1 family. Interacts with SLC9A3R2/NHERF2, MAGI3 and PLCB3. Interacts with RALA and GRK2.

The protein localises to the cell surface. The protein resides in the cell membrane. Its function is as follows. Receptor for lysophosphatidic acid (LPA), a mediator of diverse cellular activities. Seems to be coupled to the G(i)/G(o), G(12)/G(13), and G(q) families of heteromeric G proteins. Plays a key role in phospholipase C-beta (PLC-beta) signaling pathway. Stimulates phospholipase C (PLC) activity in a manner that is independent of RALA activation. The sequence is that of Lysophosphatidic acid receptor 2 from Macaca fascicularis (Crab-eating macaque).